The following is a 460-amino-acid chain: Lipase member H (460 aa).

Positions Met1–Thr24 are cleaved as a signal peptide. N-linked (GlcNAc...) asparagine glycosylation is found at Asn67 and Asn75. The active-site Nucleophile is the Ser163. Residue Asn177 is glycosylated (N-linked (GlcNAc...) asparagine). Asp187 serves as the catalytic Charge relay system. Cysteines 242 and 255 form a disulfide. His257 acts as the Charge relay system in catalysis. 2 disulfide bridges follow: Cys279/Cys290 and Cys293/Cys301. N-linked (GlcNAc...) asparagine glycosylation occurs at Asn289. N-linked (GlcNAc...) asparagine glycosylation occurs at Asn366. Cys436 and Cys455 form a disulfide bridge.

Belongs to the AB hydrolase superfamily. Lipase family.

It is found in the secreted. The protein resides in the cell membrane. It carries out the reaction 1-hexadecanoyl-2-(9Z-octadecenoyl)-sn-glycero-3-phosphate + H2O = 2-(9Z-octadecenoyl)-sn-glycero-3-phosphate + hexadecanoate + H(+). Its function is as follows. Hydrolyzes specifically phosphatidic acid (PA) to produce 2-acyl lysophosphatidic acid (LPA; a potent bioactive lipid mediator) and fatty acid. Does not hydrolyze other phospholipids, like phosphatidylserine (PS), phosphatidylcholine (PC) and phosphatidylethanolamine (PE) or triacylglycerol (TG). The protein is Lipase member H (liph) of Xenopus tropicalis (Western clawed frog).